Consider the following 381-residue polypeptide: Acetylornithine deacetylase (381 aa).

A Zn(2+)-binding site is contributed by histidine 78. The active site involves aspartate 80. Position 110 (aspartate 110) interacts with Zn(2+). Glutamate 142 is a catalytic residue. Zn(2+) contacts are provided by glutamate 143, glutamate 167, and histidine 353.

It belongs to the peptidase M20A family. ArgE subfamily. As to quaternary structure, homodimer. Zn(2+) is required as a cofactor. Co(2+) serves as cofactor. The cofactor is glutathione.

It localises to the cytoplasm. The enzyme catalyses N(2)-acetyl-L-ornithine + H2O = L-ornithine + acetate. Its pathway is amino-acid biosynthesis; L-arginine biosynthesis; L-ornithine from N(2)-acetyl-L-ornithine (linear): step 1/1. In terms of biological role, catalyzes the hydrolysis of the amide bond of N(2)-acetylated L-amino acids. Cleaves the acetyl group from N-acetyl-L-ornithine to form L-ornithine, an intermediate in L-arginine biosynthesis pathway, and a branchpoint in the synthesis of polyamines. The polypeptide is Acetylornithine deacetylase (Moritella profunda).